Here is a 247-residue protein sequence, read N- to C-terminus: RNA-free ribonuclease P (247 aa).

A disordered region spans residues 223 to 247 (SPEGEKEKGEADKKKKSHSEEAEFI).

Belongs to the HARP family.

The enzyme catalyses Endonucleolytic cleavage of RNA, removing 5'-extranucleotides from tRNA precursor.. Its function is as follows. RNA-free RNase P that catalyzes the removal of the 5'-leader sequence from pre-tRNA to produce the mature 5'-terminus. The protein is RNA-free ribonuclease P of Methanosarcina acetivorans (strain ATCC 35395 / DSM 2834 / JCM 12185 / C2A).